Here is a 235-residue protein sequence, read N- to C-terminus: Small ribosomal subunit protein uS2 (235 aa).

It belongs to the universal ribosomal protein uS2 family.

The protein is Small ribosomal subunit protein uS2 of Geobacillus thermodenitrificans (strain NG80-2).